A 302-amino-acid chain; its full sequence is Tetrahydromethanopterin S-methyltransferase subunit E (302 aa).

The next 6 helical transmembrane spans lie at 3-23 (PLIS…AGAS), 86-106 (PLFA…TFAV), 132-152 (ITPI…VSYL), 155-175 (VVLG…ITIG), 233-253 (PVTG…TTIF), and 259-279 (LGWL…IWNW).

This sequence belongs to the MtrE family. The complex is composed of 8 subunits; MtrA, MtrB, MtrC, MtrD, MtrE, MtrF, MtrG and MtrH.

Its subcellular location is the cell membrane. The enzyme catalyses 5-methyl-5,6,7,8-tetrahydromethanopterin + coenzyme M + 2 Na(+)(in) = 5,6,7,8-tetrahydromethanopterin + methyl-coenzyme M + 2 Na(+)(out). It functions in the pathway one-carbon metabolism; methanogenesis from CO(2); methyl-coenzyme M from 5,10-methylene-5,6,7,8-tetrahydromethanopterin: step 2/2. Its function is as follows. Part of a complex that catalyzes the formation of methyl-coenzyme M and tetrahydromethanopterin from coenzyme M and methyl-tetrahydromethanopterin. This is an energy-conserving, sodium-ion translocating step. The polypeptide is Tetrahydromethanopterin S-methyltransferase subunit E (Methanosarcina barkeri (strain Fusaro / DSM 804)).